The chain runs to 436 residues: DNA-dependent metalloprotease SPRTN (436 aa).

The SprT-like domain maps to 19–186 (IRALFLEFND…RTCGGEFVKI (168 aa)). Histidine 85 contacts Zn(2+). The active site involves glutamate 86. Residues histidine 89 and histidine 104 each coordinate Zn(2+). Positions 184-219 (VKIKEPENYSQKRKRNNDPTKSELGNSSHVKINKGK) are disordered. The short motif at 231–239 (FSGTGYKLF) is the SHP-box element. The PIP-box signature appears at 271–277 (QTDSTFL). The tract at residues 300–321 (GSPIKLPSSSNNKSHQDSSKQK) is disordered. Residues 408 to 435 (KVCCPVCGTEIFESKINDHLDTCLQNYN) form a UBZ4-type zinc finger. 4 residues coordinate Zn(2+): cysteine 411, cysteine 414, histidine 426, and cysteine 430.

The protein belongs to the Spartan family. Homodimer. It depends on Zn(2+) as a cofactor. Post-translationally, autocatalytically cleaved in response to double-stranded DNA-binding: autocatalytic cleavage takes place in trans and leads to inactivation.

It is found in the nucleus. The protein localises to the chromosome. With respect to regulation, DNA-binding activates the protease activity: single-stranded DNA-binding specifically activates ability to cleave covalent DNA-protein cross-links (DPCs). In contrast, double-stranded DNA-binding specifically activates autocatalytic cleavage, and subsequent inactivation. Its function is as follows. DNA-dependent metalloendopeptidase that mediates the proteolytic cleavage of covalent DNA-protein cross-links (DPCs) during DNA synthesis, thereby playing a key role in maintaining genomic integrity. DPCs are highly toxic DNA lesions that interfere with essential chromatin transactions, such as replication and transcription, and which are induced by reactive agents, such as UV light or formaldehyde. Associates with the DNA replication machinery and specifically removes DPCs during DNA synthesis. Catalyzes proteolytic cleavage of the hmces DNA-protein cross-link following unfolding by the brip1/fancj helicase. Acts as a pleiotropic protease for DNA-binding proteins cross-linked with DNA, such as top1, top2a, histones H3 and H4. Mediates degradation of DPCs that are not ubiquitinated, while it is not able to degrade ubiquitinated DPCs. SPRTN activation requires polymerase collision with DPCs followed by helicase bypass of DPCs. May also act as a 'reader' of ubiquitinated pcna: facilitates chromatin association of rad18 and is required for efficient pcna monoubiquitination, promoting a feed-forward loop to enhance pcna ubiquitination and translesion DNA synthesis. Acts as a regulator of translesion DNA synthesis by recruiting vcp/p97 to sites of DNA damage. This chain is DNA-dependent metalloprotease SPRTN, found in Xenopus tropicalis (Western clawed frog).